Consider the following 521-residue polypeptide: MSLIVDILIDDLRALIRDLGQNGGLMSPSVYDTSQALRLYPTPSEEHVWPAVNWLISQQQSDGGWGNPSMPLSRAVPTLAAILALRRHCQRRSTFDGLLEAKRFLRRQLEYWEKPLPDNLPVGMELLLPYMLEEAYREEHQDDIDDVPIKLRLNIPLAPYRELIALGEHKRSLIQQKKPRAGTAPVYSWEAWASHADPELIDGSGGIGHSPAATAAWLFAANHNPNLRNEIAGAENYLRQASLATSESAPCIMPTAWPIPRFEQSFSLYALVTGGILDFPSIQDVLKPQIADLHQALKPRGIGFSDDFMPDGDDTAAAVAVLIAAGYPVDLAILNQFEREPYFVAYHGELQPSISLTARAVHALDLAGVDISRWWKIFIDAQKLDGSWSGDKWNTSWLYTTCHVLIALKNSPYKTAMKEAVAALQVHQHPDGGWGIINRSTTVETAYAVLALQNLREAGLLDDDDIHMLQRGYNWLCIHYRPFRMKEYQCWLNKEIYCPQRIDRAYELSAMLAVTLGELKL.

Mg(2+)-binding residues include Asp311 and Asp313. Residues 311–314 (DGDD) carry the DXDD motif motif.

It belongs to the terpene synthase family. It depends on Mg(2+) as a cofactor.

It carries out the reaction (2E,6E,10E)-geranylgeranyl diphosphate = (+)-kolavenyl diphosphate. Involved in the biosynthesis of (+)-O-methylkolavelool. Catalyzes the conversion of geranylgeranyl diphosphate into (+)-kolavenyl diphosphate. This chain is (+)-kolavenyl diphosphate synthase, found in Herpetosiphon aurantiacus (strain ATCC 23779 / DSM 785 / 114-95).